The chain runs to 732 residues: DNA-directed RNA polymerase subunit beta' (732 aa).

Zn(2+)-binding residues include Cys70, Cys72, Cys85, and Cys88. Mg(2+) is bound by residues Asp575, Asp577, and Asp579.

It belongs to the RNA polymerase beta' chain family. RpoC1 subfamily. As to quaternary structure, in plastids the minimal PEP RNA polymerase catalytic core is composed of four subunits: alpha, beta, beta', and beta''. When a (nuclear-encoded) sigma factor is associated with the core the holoenzyme is formed, which can initiate transcription. Mg(2+) is required as a cofactor. The cofactor is Zn(2+).

Its subcellular location is the plastid. It localises to the chloroplast. It catalyses the reaction RNA(n) + a ribonucleoside 5'-triphosphate = RNA(n+1) + diphosphate. DNA-dependent RNA polymerase catalyzes the transcription of DNA into RNA using the four ribonucleoside triphosphates as substrates. This Thalassiosira pseudonana (Marine diatom) protein is DNA-directed RNA polymerase subunit beta'.